A 381-amino-acid chain; its full sequence is Putative F-box protein At3g17500 (381 aa).

In terms of domain architecture, F-box spans 1–45; the sequence is MMSNLPLDLVEEILSRVPATSLKRLRSTCKSWNNCYKDQRFTEKH.

In Arabidopsis thaliana (Mouse-ear cress), this protein is Putative F-box protein At3g17500.